We begin with the raw amino-acid sequence, 496 residues long: Zinc finger and SCAN domain-containing protein 5C (496 aa).

Positions 1-19 (MAANCTSSWSLGESCNSPG) are enriched in polar residues. Residues 1–38 (MAANCTSSWSLGESCNSPGSEPPQSMPSPATQLGNHDS) form a disordered region. An SCAN box domain is found at 44–126 (HVNFRMFSCP…DLLRNNRRPK (83 aa)). Disordered regions lie at residues 149–188 (EAPA…TLPR) and 203–347 (PETT…HPSG). Residues 161–171 (VSSQRTSSVNQ) are compositionally biased toward polar residues. The segment covering 210 to 223 (GDPKALRPKPTLEK) has biased composition (basic and acidic residues). A compositionally biased stretch (polar residues) spans 234-247 (GLTSPEPQLPNSPT). The segment covering 253–263 (KEGKEPQKRAS) has biased composition (basic and acidic residues). 5 consecutive C2H2-type zinc fingers follow at residues 356–378 (FACE…TRSH), 384–406 (FQCN…QRTH), 412–434 (YTCD…KRSH), 440–462 (FECK…QRIH), and 468–490 (HKCS…QKTH).

The protein resides in the nucleus. Functionally, may be involved in transcriptional regulation. This is Zinc finger and SCAN domain-containing protein 5C from Homo sapiens (Human).